The following is a 306-amino-acid chain: Protodermal factor 1 (306 aa).

A signal peptide spans 1 to 23 (MRGMVSFAVWALFAALLSQQLFA). Over residues 40–56 (PPSGSHGTPPSHTPPSS) the composition is skewed to low complexity. Residues 40–156 (PPSGSHGTPP…VVTPPSPIVD (117 aa)) are disordered. Residues 62–83 (PYDPSPSTPSHPSPPSHTPTPS) show a composition bias toward pro residues. Low complexity predominate over residues 84–99 (TPSHTPTPHTPSHTPT). Positions 139–154 (SPPPRTPVVVTPPSPI) are enriched in pro residues.

Confined to the shoot apical meristem (SAM) at the layer L1 in vegetative, infloresence and floral meristems, as well as in protoderm of organ primordia, including during embryogenesis. Also present in the tip of emerging lateral root primordia.

In terms of biological role, may be involved in the regulation of meristem growth. The sequence is that of Protodermal factor 1 (PDF1) from Arabidopsis thaliana (Mouse-ear cress).